A 294-amino-acid polypeptide reads, in one-letter code: 4-hydroxy-tetrahydrodipicolinate synthase (294 aa).

Thr44 contributes to the pyruvate binding site. Tyr132 functions as the Proton donor/acceptor in the catalytic mechanism. Catalysis depends on Lys161, which acts as the Schiff-base intermediate with substrate. Ile206 lines the pyruvate pocket.

This sequence belongs to the DapA family. Homotetramer; dimer of dimers.

The protein resides in the cytoplasm. It catalyses the reaction L-aspartate 4-semialdehyde + pyruvate = (2S,4S)-4-hydroxy-2,3,4,5-tetrahydrodipicolinate + H2O + H(+). The protein operates within amino-acid biosynthesis; L-lysine biosynthesis via DAP pathway; (S)-tetrahydrodipicolinate from L-aspartate: step 3/4. In terms of biological role, catalyzes the condensation of (S)-aspartate-beta-semialdehyde [(S)-ASA] and pyruvate to 4-hydroxy-tetrahydrodipicolinate (HTPA). This chain is 4-hydroxy-tetrahydrodipicolinate synthase, found in Thermotoga neapolitana (strain ATCC 49049 / DSM 4359 / NBRC 107923 / NS-E).